The following is a 198-amino-acid chain: 3-isopropylmalate dehydratase small subunit (198 aa).

It belongs to the LeuD family. LeuD type 1 subfamily. Heterodimer of LeuC and LeuD.

The enzyme catalyses (2R,3S)-3-isopropylmalate = (2S)-2-isopropylmalate. Its pathway is amino-acid biosynthesis; L-leucine biosynthesis; L-leucine from 3-methyl-2-oxobutanoate: step 2/4. Catalyzes the isomerization between 2-isopropylmalate and 3-isopropylmalate, via the formation of 2-isopropylmaleate. The sequence is that of 3-isopropylmalate dehydratase small subunit from Mycobacterium marinum (strain ATCC BAA-535 / M).